A 212-amino-acid chain; its full sequence is MTKMHRYAAIAALAIFLSGCMAQRQPAPVEEVKPAPEQPAQPPQPPVVPSVPTIPQQPGPIEHEDQTGQPAPKVRHYDWNGAMQPLVSKMLQADGVTAGSVLLVDSVNNRTNGSLNANEATETLRNALANNGKFTLVSVQQLSMAKQQLGLSPQDSLGTRSKAIGIARNVGAQYVLYSSASGNVNAPALQMQLMLVQTGEIIWSGKGAVQQQ.

A signal peptide spans 1–19; sequence MTKMHRYAAIAALAIFLSG. C20 carries the N-palmitoyl cysteine lipid modification. Residue C20 is the site of S-diacylglycerol cysteine attachment. The tract at residues 28-73 is disordered; that stretch reads PVEEVKPAPEQPAQPPQPPVVPSVPTIPQQPGPIEHEDQTGQPAPK. Residues 36–49 are compositionally biased toward pro residues; that stretch reads PEQPAQPPQPPVVP.

Belongs to the LpoB family. Interacts with PBP1b.

It is found in the cell outer membrane. Functionally, regulator of peptidoglycan synthesis that is essential for the function of penicillin-binding protein 1B (PBP1b). In Salmonella typhimurium (strain LT2 / SGSC1412 / ATCC 700720), this protein is Penicillin-binding protein activator LpoB.